Here is a 153-residue protein sequence, read N- to C-terminus: Ribosomal RNA large subunit methyltransferase H (153 aa).

S-adenosyl-L-methionine contacts are provided by residues leucine 70, glycine 102, and 121-126; that span reads FSKMTF.

It belongs to the RNA methyltransferase RlmH family. As to quaternary structure, homodimer.

The protein resides in the cytoplasm. The catalysed reaction is pseudouridine(1915) in 23S rRNA + S-adenosyl-L-methionine = N(3)-methylpseudouridine(1915) in 23S rRNA + S-adenosyl-L-homocysteine + H(+). Functionally, specifically methylates the pseudouridine at position 1915 (m3Psi1915) in 23S rRNA. This chain is Ribosomal RNA large subunit methyltransferase H, found in Desulfotalea psychrophila (strain LSv54 / DSM 12343).